The following is a 459-amino-acid chain: Elongation factor 1-alpha 2 (459 aa).

The tr-type G domain maps to 5 to 242 (KTHINIVVIG…DCIIPPQRPT (238 aa)). The tract at residues 14 to 21 (GHVDSGKS) is G1. The interval 70-74 (GITID) is G2. Residues 91–94 (DAPG) are G3. The segment at 153-156 (NKMD) is G4. Positions 194 to 196 (SGF) are G5. 2 positions are modified to 5-glutamyl glycerylphosphorylethanolamine: glutamate 301 and glutamate 374.

This sequence belongs to the TRAFAC class translation factor GTPase superfamily. Classic translation factor GTPase family. EF-Tu/EF-1A subfamily.

Its subcellular location is the cytoplasm. In terms of biological role, this protein promotes the GTP-dependent binding of aminoacyl-tRNA to the A-site of ribosomes during protein biosynthesis. The protein is Elongation factor 1-alpha 2 (eft-2) of Oscheius tipulae.